The primary structure comprises 262 residues: Deaminated glutathione amidase (262 aa).

Residues 1–238 (MLVAAGQFAV…PALIMAEVTP (238 aa)) form the CN hydrolase domain. The Proton acceptor role is filled by Glu40. The active-site Proton donor is Lys110. Cys147 functions as the Nucleophile in the catalytic mechanism.

Belongs to the carbon-nitrogen hydrolase superfamily. NIT1/NIT2 family.

It carries out the reaction N-(4-oxoglutaryl)-L-cysteinylglycine + H2O = L-cysteinylglycine + 2-oxoglutarate. Functionally, hydrolyzes deaminated glutathione (dGSH) to 2-oxoglutarate and L-cysteinylglycine, and no activity on glutathione or L-glutamine. May function as a metabolite repair enzyme. This is Deaminated glutathione amidase (ybeM) from Escherichia coli O157:H7.